Reading from the N-terminus, the 736-residue chain is Elongation factor 2 (736 aa).

The region spanning 19 to 262 (DQIRNIGIIA…MVIKFVPNPR (244 aa)) is the tr-type G domain. GTP is bound by residues 28–35 (AHVDHGKT), 94–98 (DTPGH), and 148–151 (NKVD). Diphthamide is present on His-602.

The protein belongs to the TRAFAC class translation factor GTPase superfamily. Classic translation factor GTPase family. EF-G/EF-2 subfamily.

Its subcellular location is the cytoplasm. In terms of biological role, catalyzes the GTP-dependent ribosomal translocation step during translation elongation. During this step, the ribosome changes from the pre-translocational (PRE) to the post-translocational (POST) state as the newly formed A-site-bound peptidyl-tRNA and P-site-bound deacylated tRNA move to the P and E sites, respectively. Catalyzes the coordinated movement of the two tRNA molecules, the mRNA and conformational changes in the ribosome. The polypeptide is Elongation factor 2 (fusA) (Aeropyrum pernix (strain ATCC 700893 / DSM 11879 / JCM 9820 / NBRC 100138 / K1)).